The sequence spans 505 residues: Maturase K (505 aa).

This sequence belongs to the intron maturase 2 family. MatK subfamily.

The protein resides in the plastid. The protein localises to the chloroplast. In terms of biological role, usually encoded in the trnK tRNA gene intron. Probably assists in splicing its own and other chloroplast group II introns. The polypeptide is Maturase K (Amaranthus greggii (Gregg's amaranth)).